The sequence spans 1517 residues: Dual oxidase 2 (1517 aa).

The signal sequence occupies residues 1–25 (MLPTSLKTLVLLGALLTGPLGPAGG). Residues 26–599 (QDAPSLPREV…YFEGSGAGYG (574 aa)) are Extracellular-facing. Positions 30 to 596 (SLPREVQRYD…VIDYFEGSGA (567 aa)) are peroxidase-like; mediates peroxidase activity. Asn-100, Asn-348, Asn-455, and Asn-537 each carry an N-linked (GlcNAc...) asparagine glycan. Cys-124 and Cys-1131 are disulfide-bonded. The chain crosses the membrane as a helical span at residues 600-620 (VTLLAVCCFPVVSLIIAWVVA). The Cytoplasmic portion of the chain corresponds to 621–1010 (RFRNRERKML…KRFVENYRRH (390 aa)). 3 consecutive EF-hand domains span residues 819–854 (PQDMFVESMFSLADKDGNGYISFREFLDILVVFMKG), 855–890 (SPQDKSRLMFTMYDLDGNGFLSKEEFFTMMRSFIEI), and 899–934 (QLAEVVESMFRESGFQDKEELTWEDFHFMLRDHDSD). Ca(2+)-binding residues include Asp-832, Asp-834, Asn-836, Tyr-838, Glu-843, Asp-868, Asp-870, Asn-872, and Glu-879. The tract at residues 960–1214 (RVSFLTRTPG…GSYALIQLPS (255 aa)) is interaction with TXNDC11. Residues 1011–1031 (IVCVTIFSAICAGLFADRAYY) form a helical membrane-spanning segment. Residues 1032-1046 (YGFASPPTDIEETTY) lie on the Extracellular side of the membrane. A helical membrane pass occupies residues 1047–1067 (VGIILSRGTAASISFMFSYIL). One can recognise a Ferric oxidoreductase domain in the interval 1053–1235 (RGTAASISFM…YVGDKLVSLS (183 aa)). At 1068-1100 (LTMCRNLITFLRETFLNRYIPFDAAVDFHRWIA) the chain is on the cytoplasmic side. Residues 1101 to 1121 (MAAVVLAVVHSLGHAVNVYIF) form a helical membrane-spanning segment. Residues 1122 to 1154 (SVSPLSLMTCVFPSVFVNDGSKLPPKYYWWFFE) are Extracellular-facing. A helical transmembrane segment spans residues 1155–1175 (TVPGMTGVLLLLVLAIMYVFA). Over 1176-1185 (SHHFRRHSFR) the chain is Cytoplasmic. The chain crosses the membrane as a helical span at residues 1186-1206 (GFWLTHHLYVVLYALIIIHGS). A topological domain (extracellular) is located at residue Tyr-1207. A helical transmembrane segment spans residues 1208-1228 (ALIQLPSFHIYFLVPAIIYVG). Residues 1229-1517 (DKLVSLSRKK…AHFVHHYENF (289 aa)) lie on the Cytoplasmic side of the membrane. Residues 1236 to 1342 (RKKVEISVVK…DGPFGEGHQE (107 aa)) enclose the FAD-binding FR-type domain.

In the N-terminal section; belongs to the peroxidase family. As to quaternary structure, heterodimer with DUOXA2; disulfide-linked. Interacts with TXNDC11, TPO and CYBA. In terms of processing, N-glycosylated. Expressed in colon, duodenum, rectum and thyroid.

It is found in the apical cell membrane. The protein localises to the cell junction. It carries out the reaction NADH + O2 + H(+) = H2O2 + NAD(+). The enzyme catalyses NADPH + O2 + H(+) = H2O2 + NADP(+). It functions in the pathway hormone biosynthesis; thyroid hormone biosynthesis. Its activity is regulated as follows. The NADPH oxidase activity is calcium-dependent. Peroxidase activity is inhibited by aminobenzohydrazide. Generates hydrogen peroxide which is required for the activity of thyroid peroxidase/TPO and lactoperoxidase/LPO. Plays a role in thyroid hormones synthesis and lactoperoxidase-mediated antimicrobial defense at the surface of mucosa. May have its own peroxidase activity through its N-terminal peroxidase-like domain. The sequence is that of Dual oxidase 2 (Duox2) from Rattus norvegicus (Rat).